Here is a 519-residue protein sequence, read N- to C-terminus: Probable cytosol aminopeptidase (519 aa).

Lysine 251 and aspartate 256 together coordinate Mn(2+). Lysine 263 is a catalytic residue. 3 residues coordinate Mn(2+): aspartate 274, aspartate 333, and glutamate 335. Arginine 337 is an active-site residue. Over residues 487-502 the composition is skewed to low complexity; the sequence is VAPAAPAAPAAPAARP. A disordered region spans residues 487-519; it reads VAPAAPAAPAAPAARPAAKRTGRSQGGLKRTAP.

It belongs to the peptidase M17 family. Mn(2+) serves as cofactor.

It is found in the cytoplasm. The catalysed reaction is Release of an N-terminal amino acid, Xaa-|-Yaa-, in which Xaa is preferably Leu, but may be other amino acids including Pro although not Arg or Lys, and Yaa may be Pro. Amino acid amides and methyl esters are also readily hydrolyzed, but rates on arylamides are exceedingly low.. It carries out the reaction Release of an N-terminal amino acid, preferentially leucine, but not glutamic or aspartic acids.. In terms of biological role, presumably involved in the processing and regular turnover of intracellular proteins. Catalyzes the removal of unsubstituted N-terminal amino acids from various peptides. In Verminephrobacter eiseniae (strain EF01-2), this protein is Probable cytosol aminopeptidase.